The primary structure comprises 137 residues: Small ribosomal subunit protein uS12 (137 aa).

A disordered region spans residues 1–57 (MPTINQLVRKPRKSKVEKSKSPALNVGYNSHKKVQTNVSSPQKRGVATRVGTMTPKK). Position 102 is a 3-methylthioaspartic acid (D102).

Belongs to the universal ribosomal protein uS12 family. As to quaternary structure, part of the 30S ribosomal subunit. Contacts proteins S8 and S17. May interact with IF1 in the 30S initiation complex.

Functionally, with S4 and S5 plays an important role in translational accuracy. Interacts with and stabilizes bases of the 16S rRNA that are involved in tRNA selection in the A site and with the mRNA backbone. Located at the interface of the 30S and 50S subunits, it traverses the body of the 30S subunit contacting proteins on the other side and probably holding the rRNA structure together. The combined cluster of proteins S8, S12 and S17 appears to hold together the shoulder and platform of the 30S subunit. The protein is Small ribosomal subunit protein uS12 of Streptococcus sanguinis (strain SK36).